Here is a 127-residue protein sequence, read N- to C-terminus: Large ribosomal subunit protein eL8 (127 aa).

The protein belongs to the eukaryotic ribosomal protein eL8 family. In terms of assembly, part of the 50S ribosomal subunit. Probably part of the RNase P complex.

Its subcellular location is the cytoplasm. Functionally, multifunctional RNA-binding protein that recognizes the K-turn motif in ribosomal RNA, the RNA component of RNase P, box H/ACA, box C/D and box C'/D' sRNAs. The protein is Large ribosomal subunit protein eL8 of Picrophilus torridus (strain ATCC 700027 / DSM 9790 / JCM 10055 / NBRC 100828 / KAW 2/3).